We begin with the raw amino-acid sequence, 221 residues long: MLDQKELLCLLQLASPILPVGAYSYSEGLETLVEKGIISNSASLNDWLERSLCQGSIRLETAVLLRVYRCFCQEDFTKLNYWDNWLSATRETAELRQQSWQMGRSLLNLLRELAPARDNLPEQANYATAFAIGASHWQIGEELAVLGYLHSWASNLINAGLRLIPLGQTLGQSLLIGLQPSLLTATADIISLADENLSSWSWGLSFASMNHETQYSRLFRS.

The protein belongs to the UreF family. In terms of assembly, ureD, UreF and UreG form a complex that acts as a GTP-hydrolysis-dependent molecular chaperone, activating the urease apoprotein by helping to assemble the nickel containing metallocenter of UreC. The UreE protein probably delivers the nickel.

Its subcellular location is the cytoplasm. Functionally, required for maturation of urease via the functional incorporation of the urease nickel metallocenter. The chain is Urease accessory protein UreF from Microcystis aeruginosa (strain NIES-843 / IAM M-2473).